The primary structure comprises 321 residues: MKTINKITIAILTLSAAASVNAATTLKMGMQASVGSVEYNSAKMLADTLEEMSQGEIKLALYPSAQLGDDRAMLQQLTLGDLDITYAEFGRMGLWIPRAEAVMLPYVAKDFDHLRRMFESDFGQGVRDEMLQKFNWRALDTWYNGTRETTSNRPLNSIEDFKGLKLRVPNAKQNLNYAKLSGASPTPMSFSEVYLALQTNAVDGQENPLPTIKTMKFYEVQKNLAMTHHIVNDQMVIISESTWQKLSDTDKDIIQKAVQKVGDAHTQTVKTQEAELVSFFKSEGINVTYPDLEPFREAMQPLYKEFDSNIGQPIVSKLAAM.

A signal peptide spans 1–22 (MKTINKITIAILTLSAAASVNA).

Belongs to the bacterial solute-binding protein 7 family. In terms of assembly, the complex comprises the extracytoplasmic solute receptor protein SiaP, and the two transmembrane proteins SiaQ and SiaM.

The protein localises to the periplasm. Part of the tripartite ATP-independent periplasmic (TRAP) transport system SiaPQM that catalyzes unidirectional Na(+)-dependent sialic acid uptake. Binds the common sialic acid N-acetylneuraminic acid (Neu5Ac) with a high affinity. The chain is Sialic acid-binding periplasmic protein SiaP from Vibrio cholerae serotype O1 (strain ATCC 39315 / El Tor Inaba N16961).